Consider the following 235-residue polypeptide: Lipoprotein-releasing system ATP-binding protein LolD 1 (235 aa).

One can recognise an ABC transporter domain in the interval 5 to 234; it reads FEARGITKSY…DGRLQLCTPL (230 aa). 42-49 serves as a coordination point for ATP; that stretch reads GASGSGKT.

The protein belongs to the ABC transporter superfamily. Lipoprotein translocase (TC 3.A.1.125) family. In terms of assembly, the complex is composed of two ATP-binding proteins (LolD) and two transmembrane proteins (LolC and LolE).

It localises to the cell inner membrane. Its function is as follows. Part of the ABC transporter complex LolCDE involved in the translocation of mature outer membrane-directed lipoproteins, from the inner membrane to the periplasmic chaperone, LolA. Responsible for the formation of the LolA-lipoprotein complex in an ATP-dependent manner. The polypeptide is Lipoprotein-releasing system ATP-binding protein LolD 1 (Chlorobium luteolum (strain DSM 273 / BCRC 81028 / 2530) (Pelodictyon luteolum)).